The following is a 445-amino-acid chain: tRNA modification GTPase MnmE (445 aa).

R20, E79, and K119 together coordinate (6S)-5-formyl-5,6,7,8-tetrahydrofolate. One can recognise a TrmE-type G domain in the interval 215–371; sequence GLKLAIIGPP…ILKNIENIAE (157 aa). N225 contributes to the K(+) binding site. GTP-binding positions include 225-230, 244-250, and 269-272; these read NAGKSS, SNIAGTT, and DTAG. S229 is a Mg(2+) binding site. K(+) is bound by residues S244, I246, and T249. Mg(2+) is bound at residue T250. Residue K445 coordinates (6S)-5-formyl-5,6,7,8-tetrahydrofolate.

The protein belongs to the TRAFAC class TrmE-Era-EngA-EngB-Septin-like GTPase superfamily. TrmE GTPase family. As to quaternary structure, homodimer. Heterotetramer of two MnmE and two MnmG subunits. Requires K(+) as cofactor.

The protein resides in the cytoplasm. Functionally, exhibits a very high intrinsic GTPase hydrolysis rate. Involved in the addition of a carboxymethylaminomethyl (cmnm) group at the wobble position (U34) of certain tRNAs, forming tRNA-cmnm(5)s(2)U34. This Rickettsia canadensis (strain McKiel) protein is tRNA modification GTPase MnmE.